Consider the following 431-residue polypeptide: Tol-Pal system protein TolB (431 aa).

The first 19 residues, 1–19 (MKRLLFFLICVFFSKTSYS), serve as a signal peptide directing secretion.

This sequence belongs to the TolB family. The Tol-Pal system is composed of five core proteins: the inner membrane proteins TolA, TolQ and TolR, the periplasmic protein TolB and the outer membrane protein Pal. They form a network linking the inner and outer membranes and the peptidoglycan layer.

Its subcellular location is the periplasm. In terms of biological role, part of the Tol-Pal system, which plays a role in outer membrane invagination during cell division and is important for maintaining outer membrane integrity. TolB occupies a key intermediary position in the Tol-Pal system because it communicates directly with both membrane-embedded components, Pal in the outer membrane and TolA in the inner membrane. The polypeptide is Tol-Pal system protein TolB (Wigglesworthia glossinidia brevipalpis).